Here is a 488-residue protein sequence, read N- to C-terminus: ATP synthase subunit beta (488 aa).

164–171 (GGAGVGKT) provides a ligand contact to ATP.

It belongs to the ATPase alpha/beta chains family. In terms of assembly, F-type ATPases have 2 components, CF(1) - the catalytic core - and CF(0) - the membrane proton channel. CF(1) has five subunits: alpha(3), beta(3), gamma(1), delta(1), epsilon(1). CF(0) has four main subunits: a(1), b(1), b'(1) and c(9-12).

It is found in the cellular thylakoid membrane. The catalysed reaction is ATP + H2O + 4 H(+)(in) = ADP + phosphate + 5 H(+)(out). Produces ATP from ADP in the presence of a proton gradient across the membrane. The catalytic sites are hosted primarily by the beta subunits. This is ATP synthase subunit beta from Prochlorococcus marinus (strain MIT 9211).